The chain runs to 141 residues: Nucleoside diphosphate kinase (141 aa).

6 residues coordinate ATP: Lys-11, Phe-59, Arg-87, Thr-93, Arg-104, and Asn-114. His-117 (pros-phosphohistidine intermediate) is an active-site residue.

The protein belongs to the NDK family. Homotetramer. Requires Mg(2+) as cofactor.

Its subcellular location is the cytoplasm. The catalysed reaction is a 2'-deoxyribonucleoside 5'-diphosphate + ATP = a 2'-deoxyribonucleoside 5'-triphosphate + ADP. The enzyme catalyses a ribonucleoside 5'-diphosphate + ATP = a ribonucleoside 5'-triphosphate + ADP. Major role in the synthesis of nucleoside triphosphates other than ATP. The ATP gamma phosphate is transferred to the NDP beta phosphate via a ping-pong mechanism, using a phosphorylated active-site intermediate. This is Nucleoside diphosphate kinase from Paraburkholderia phytofirmans (strain DSM 17436 / LMG 22146 / PsJN) (Burkholderia phytofirmans).